Here is a 317-residue protein sequence, read N- to C-terminus: L-lactate dehydrogenase (317 aa).

Residues V17, D38, K43, Y69, and 83 to 84 (GA) contribute to the NAD(+) site. Residues Q86 and R92 each contribute to the substrate site. Residues S105, 122–124 (ATN), and S147 each bind NAD(+). 124–127 (NPVD) contacts substrate. 152–155 (DTAR) serves as a coordination point for substrate. R157 and H172 together coordinate beta-D-fructose 1,6-bisphosphate. The active-site Proton acceptor is the H179. At Y224 the chain carries Phosphotyrosine. T233 is a substrate binding site.

It belongs to the LDH/MDH superfamily. LDH family. In terms of assembly, homotetramer.

It is found in the cytoplasm. The enzyme catalyses (S)-lactate + NAD(+) = pyruvate + NADH + H(+). Its pathway is fermentation; pyruvate fermentation to lactate; (S)-lactate from pyruvate: step 1/1. Allosterically activated by fructose 1,6-bisphosphate (FBP). Catalyzes the conversion of lactate to pyruvate. The chain is L-lactate dehydrogenase from Bacillus caldotenax.